A 246-amino-acid polypeptide reads, in one-letter code: Cell division protein ZapD (246 aa).

This sequence belongs to the ZapD family. In terms of assembly, interacts with FtsZ.

The protein localises to the cytoplasm. In terms of biological role, cell division factor that enhances FtsZ-ring assembly. Directly interacts with FtsZ and promotes bundling of FtsZ protofilaments, with a reduction in FtsZ GTPase activity. The polypeptide is Cell division protein ZapD (Vibrio parahaemolyticus serotype O3:K6 (strain RIMD 2210633)).